The primary structure comprises 562 residues: MKNLLRALISQGIEALRANGTLPADSLPPDFVVERPKTRDHGDFATNAAMLLAKAARSNPRALAQALVEALPRSEDVSKVEIAGPGFINFHLAPAAYQREAASVIKEAHDYGRNLSGNGRTVGVEYVSANPTGPLHVGHGRAAAIGDCVARVLDANGWNAKREFYYNDAGVQIENLALSTQARIKGIAPDQDGWPEGGYRGEYIADVARAYMAGASVDLEGSTVVGAKDPDDMQAIRRFAVAYLRNEQNLDLAAFGVDFDIYFLESSLYADGKVAEAVAKLQASGHTYEEGGALWLRSTDFGDDKDRVMRKSDGTFTYFVPDVAYHLSKWQRGYERAITELGADHHGSLARVRAGLQAMEVGIPQGWPEYVLHQMVTVMRGGEEVKLSKRAGSYFTLRDLIEEAGRDATRWFLIARKPDSQLTFDIDLARQQSNDNPVFYVQYAHARVCSLLRQAQEKGLVYEQGNGLANLGRLADDASLLLMNEISRYPEVVEAAGVALEPHLVAQYLRELAHAFHTWYHGTPVLVEDAADRNAKLTLACAARQVLANGLELLGVSAPEKM.

A 'HIGH' region motif is present at residues 129-139 (ANPTGPLHVGH).

Belongs to the class-I aminoacyl-tRNA synthetase family. In terms of assembly, monomer.

The protein localises to the cytoplasm. The enzyme catalyses tRNA(Arg) + L-arginine + ATP = L-arginyl-tRNA(Arg) + AMP + diphosphate. The polypeptide is Arginine--tRNA ligase (Stenotrophomonas maltophilia (strain K279a)).